The chain runs to 768 residues: ATP-dependent zinc metalloprotease FtsH (768 aa).

Residues 1 to 33 (MADRDKNDIRKRLEELRKDNNRRNNRQDNGNRS) are Cytoplasmic-facing. The helical transmembrane segment at 34–54 (PFSGFLFFIFVILLFTFTLLF) threads the bilayer. Topologically, residues 55–139 (HRDIQTYFQE…KLNSLQPSGG (85 aa)) are periplasmic. The helical transmembrane segment at 140–160 (GFFLLLLGQFLPMIIMIGLMV) threads the bilayer. Over 161–768 (YLAKKMVGGS…SNFKLPSFME (608 aa)) the chain is Cytoplasmic. Residue 238–245 (GRPGTGKT) participates in ATP binding. His461 lines the Zn(2+) pocket. Residue Glu462 is part of the active site. Zn(2+) contacts are provided by His465 and Asp536. The interval 647 to 768 (EESIQKGSEG…SNFKLPSFME (122 aa)) is disordered. Positions 669–698 (QENKTVEAEVHDSNLKSDTEKLAEAVREIT) are enriched in basic and acidic residues. The segment covering 715 to 731 (KDSDDNEKNDDDNENSD) has biased composition (acidic residues).

This sequence in the central section; belongs to the AAA ATPase family. It in the C-terminal section; belongs to the peptidase M41 family. Homohexamer. Requires Zn(2+) as cofactor.

It is found in the cell inner membrane. Its function is as follows. Acts as a processive, ATP-dependent zinc metallopeptidase for both cytoplasmic and membrane proteins. Plays a role in the quality control of integral membrane proteins. The protein is ATP-dependent zinc metalloprotease FtsH of Leptotrichia buccalis (strain ATCC 14201 / DSM 1135 / JCM 12969 / NCTC 10249 / C-1013-b).